A 98-amino-acid polypeptide reads, in one-letter code: Pore-forming peptide amoebapore A (98 aa).

The signal sequence occupies residues 1-21 (MKAIVFVLIFAVAFAVTATHQ). The region spanning 22–98 (GEILCNLCTG…NAICAKIHAC (77 aa)) is the Saposin B-type domain. Disulfide bonds link C26-C98, C29-C92, and C56-C67.

Monomer (at pH below 4 and pH above 6). Homodimer (at pH 4-6). Hexamer; formed during insertion in the membrane.

The protein localises to the cytoplasmic granule. Its function is as follows. Forms pores in the cell membrane of host cells. Has antibacterial activity against M.luteus, no activity against E.coli. Implicated in the cytolytic activity of the parasite. This is Pore-forming peptide amoebapore A from Entamoeba histolytica (strain ATCC 30459 / HM-1:IMSS / ABRM).